The sequence spans 475 residues: Ribulose bisphosphate carboxylase large chain (475 aa).

The propeptide occupies 1-2 (MS). Pro-3 is modified (N-acetylproline). Lys-14 is modified (N6,N6,N6-trimethyllysine). Substrate contacts are provided by Asn-123 and Thr-173. Lys-175 acts as the Proton acceptor in catalysis. Lys-177 serves as a coordination point for substrate. Mg(2+) contacts are provided by Lys-201, Asp-203, and Glu-204. An N6-carboxylysine modification is found at Lys-201. The active-site Proton acceptor is His-294. Arg-295, His-327, and Ser-379 together coordinate substrate.

The protein belongs to the RuBisCO large chain family. Type I subfamily. As to quaternary structure, heterohexadecamer of 8 large chains and 8 small chains; disulfide-linked. The disulfide link is formed within the large subunit homodimers. Requires Mg(2+) as cofactor. In terms of processing, the disulfide bond which can form in the large chain dimeric partners within the hexadecamer appears to be associated with oxidative stress and protein turnover.

It localises to the plastid. Its subcellular location is the chloroplast. The enzyme catalyses 2 (2R)-3-phosphoglycerate + 2 H(+) = D-ribulose 1,5-bisphosphate + CO2 + H2O. It carries out the reaction D-ribulose 1,5-bisphosphate + O2 = 2-phosphoglycolate + (2R)-3-phosphoglycerate + 2 H(+). Functionally, ruBisCO catalyzes two reactions: the carboxylation of D-ribulose 1,5-bisphosphate, the primary event in carbon dioxide fixation, as well as the oxidative fragmentation of the pentose substrate in the photorespiration process. Both reactions occur simultaneously and in competition at the same active site. This is Ribulose bisphosphate carboxylase large chain from Angiopteris lygodiifolia (Turnip fern).